Reading from the N-terminus, the 293-residue chain is Exosome complex component RRP4 (293 aa).

The S1 motif domain occupies 79 to 159 (EVGDIVVGRI…SDGAVSLHTR (81 aa)). The residue at position 124 (Ser-124) is a Phosphoserine.

The protein belongs to the RRP4 family. In terms of assembly, component of the RNA exosome core complex (Exo-9), composed of EXOSC1, EXOSC2, EXOSC3, EXOSC4, EXOSC5, EXOSC6, EXOSC7, EXOSC8 and EXOSC9; within the complex interacts with EXOSC4 and EXOSC7. The catalytically inactive RNA exosome core complex (Exo-9) associates with the catalytic subunit EXOSC10/RRP6. Exo-9 may associate with DIS3 to form the nucleolar exosome complex, or DIS3L to form the cytoplasmic exosome complex. Exo-9 is formed by a hexameric base ring consisting of the heterodimers EXOSC4-EXOSC9, EXOSC5-EXOSC8 and EXOSC6-EXOSC7, and a cap ring consisting of EXOSC1, EXOSC2 and EXOSC3. The RNA exosome complex associates with cofactors C1D/RRP47, MPHOSPH6/MPP6 and MTREX/MTR4. Interacts with GTPBP1. Interacts with ZFP36L1 (via N-terminus).

Its subcellular location is the cytoplasm. The protein resides in the nucleus. It localises to the nucleolus. Its function is as follows. Non-catalytic component of the RNA exosome complex which has 3'-&gt;5' exoribonuclease activity and participates in a multitude of cellular RNA processing and degradation events. In the nucleus, the RNA exosome complex is involved in proper maturation of stable RNA species such as rRNA, snRNA and snoRNA, in the elimination of RNA processing by-products and non-coding 'pervasive' transcripts, such as antisense RNA species and promoter-upstream transcripts (PROMPTs), and of mRNAs with processing defects, thereby limiting or excluding their export to the cytoplasm. The RNA exosome may be involved in Ig class switch recombination (CSR) and/or Ig variable region somatic hypermutation (SHM) by targeting AICDA deamination activity to transcribed dsDNA substrates. In the cytoplasm, the RNA exosome complex is involved in general mRNA turnover and specifically degrades inherently unstable mRNAs containing AU-rich elements (AREs) within their 3' untranslated regions, and in RNA surveillance pathways, preventing translation of aberrant mRNAs. It seems to be involved in degradation of histone mRNA. The catalytic inactive RNA exosome core complex of 9 subunits (Exo-9) is proposed to play a pivotal role in the binding and presentation of RNA for ribonucleolysis, and to serve as a scaffold for the association with catalytic subunits and accessory proteins or complexes. EXOSC2 as peripheral part of the Exo-9 complex stabilizes the hexameric ring of RNase PH-domain subunits through contacts with EXOSC4 and EXOSC7. In Homo sapiens (Human), this protein is Exosome complex component RRP4.